The following is a 371-amino-acid chain: Putative glutamate--cysteine ligase 2 (371 aa).

It belongs to the glutamate--cysteine ligase type 2 family. YbdK subfamily.

The catalysed reaction is L-cysteine + L-glutamate + ATP = gamma-L-glutamyl-L-cysteine + ADP + phosphate + H(+). ATP-dependent carboxylate-amine ligase which exhibits weak glutamate--cysteine ligase activity. This chain is Putative glutamate--cysteine ligase 2, found in Burkholderia mallei (strain NCTC 10247).